Consider the following 342-residue polypeptide: MKDRGNKNTSKTRQTVKSRRTRKTTKQFVERKKNLSAKTTIRNNRLQNNLSPQTTPTEKPVDYATARVFPQHTPYDIKFNKEKYRNNEIYAYSKLRKISNAVFRQEKEINRLTVFTDKPLADLSFKMPVNTSTTEKKEIVRSTECQRQDRNTVNAFKIFQSYETSPPYSPCSPKNFMSEIYRLFRCYNASIVQIQVYSRNKILINAMQEKLMSIGNMVINVGEQIISESVHHEPVVAIAINQFFRGTVPQTDALRKNAVTPIPVNASKKKLVGICSLMINAPTEKDLLCAAHVCINFAICYPNEITLNIAKLTQPMLLQEHITIYNSFNKYIYWDDYGKLLN.

Residues 1–33 are disordered; that stretch reads MKDRGNKNTSKTRQTVKSRRTRKTTKQFVERKK. The segment covering 14 to 25 has biased composition (basic residues); sequence QTVKSRRTRKTT.

Belongs to the herpesviridae U84 family.

This chain is Protein U84 (U84), found in Human herpesvirus 6A (strain Uganda-1102) (HHV-6 variant A).